The following is a 174-amino-acid chain: Dual-action ribosomal maturation protein DarP (174 aa).

Belongs to the DarP family.

The protein localises to the cytoplasm. Functionally, member of a network of 50S ribosomal subunit biogenesis factors which assembles along the 30S-50S interface, preventing incorrect 23S rRNA structures from forming. Promotes peptidyl transferase center (PTC) maturation. In Pseudomonas aeruginosa (strain LESB58), this protein is Dual-action ribosomal maturation protein DarP.